The chain runs to 908 residues: Glutamate receptor ionotropic, kainate 2 (908 aa).

The first 31 residues, 1–31 (MKIIFPILSNPVFRRTVKLLLCLLWIGYSQG), serve as a signal peptide directing secretion. Topologically, residues 32-561 (TTHVLRFGGI…VFSFLNPLSP (530 aa)) are extracellular. Asn-67, Asn-73, Asn-275, Asn-378, Asn-412, Asn-423, and Asn-430 each carry an N-linked (GlcNAc...) asparagine glycan. Cys-96 and Cys-347 are disulfide-bonded. 3 residues coordinate L-glutamate: Pro-516, Ala-518, and Arg-523. N-linked (GlcNAc...) asparagine glycosylation is present at Asn-546. Residues 562–582 (DIWMYVLLACLGVSCVLFVIA) form a helical membrane-spanning segment. Topologically, residues 583 to 638 (RFSPYEWYNPHPCNPDSDVVENNFTLLNSFWFGVGALMRQGSELMPKALSTRIVGG) are cytoplasmic. Residues 639–659 (IWWFFTLIIISSYTANLAAFL) traverse the membrane as a helical segment. The Extracellular portion of the chain corresponds to 660-819 (TVERMESPID…KEASALGVQN (160 aa)). L-glutamate contacts are provided by Ala-689, Thr-690, and Glu-738. Cys-750 and Cys-804 form a disulfide bridge. The N-linked (GlcNAc...) asparagine glycan is linked to Asn-751. A helical transmembrane segment spans residues 820–840 (IGGIFIVLAAGLVLSVFVAVG). Residues 841–908 (EFLYKSKKNA…RRLPGKETMA (68 aa)) lie on the Cytoplasmic side of the membrane. A phosphoserine; by PKC mark is found at Ser-846 and Ser-868. A Glycyl lysine isopeptide (Lys-Gly) (interchain with G-Cter in SUMO1) cross-link involves residue Lys-886.

This sequence belongs to the glutamate-gated ion channel (TC 1.A.10.1) family. GRIK2 subfamily. As to quaternary structure, homotetramer and heterotetramer with GRIK5. Tetramers may be formed by the dimerization of dimers. Assembles into a kainate-gated homomeric channel that does not bind AMPA. Can form functional heteromeric receptors with GRIK3, GRIK4 and GRIK5. Interacts with NETO2. Interacts with DLG4. Interacts with NETO2. Interacts (via C-terminus) with KLHL17 (via kelch repeats); the interaction targets GRIK2 for degradation via ubiquitin-proteasome pathway. Post-translationally, sumoylation mediates kainate receptor-mediated endocytosis and regulates synaptic transmission. Sumoylation is enhanced by PIAS3 and desumoylated by SENP1. In terms of processing, ubiquitinated. Ubiquitination regulates the GRIK2 levels at the synapse by leading kainate receptor degradation through proteasome. Phosphorylated by PKC at Ser-868 upon agonist activation, this directly enhance sumoylation.

The protein localises to the cell membrane. Its subcellular location is the postsynaptic cell membrane. It catalyses the reaction Ca(2+)(in) = Ca(2+)(out). It carries out the reaction Na(+)(in) = Na(+)(out). With respect to regulation, cold receptor activity activated by temperatures between 10-19 degrees Celsius. Functionally, ionotropic glutamate receptor that functions as a cation-permeable ligand-gated ion channel, gated by L-glutamate and the glutamatergic agonist kainic acid. L-glutamate acts as an excitatory neurotransmitter at many synapses in the central nervous system. Binding of the excitatory neurotransmitter L-glutamate induces a conformation change, leading to the opening of the cation channel, and thereby converts the chemical signal to an electrical impulse. The receptor then desensitizes rapidly and enters a transient inactive state, characterized by the presence of bound agonist. Modulates cell surface expression of NETO2. In association with GRIK3, involved in presynaptic facilitation of glutamate release at hippocampal mossy fiber synapses. In terms of biological role, independent of its ionotropic glutamate receptor activity, acts as a thermoreceptor conferring sensitivity to cold temperatures. Functions in dorsal root ganglion neurons. The protein is Glutamate receptor ionotropic, kainate 2 (GRIK2) of Macaca fascicularis (Crab-eating macaque).